The chain runs to 757 residues: Probable inorganic carbon transporter subunit DabA (757 aa).

Residues Cys321, Asp323, His475, and Cys490 each coordinate Zn(2+).

Belongs to the inorganic carbon transporter (TC 9.A.2) DabA family. As to quaternary structure, forms a complex with DabB. Requires Zn(2+) as cofactor.

Its subcellular location is the cell inner membrane. Its function is as follows. Part of an energy-coupled inorganic carbon pump. The sequence is that of Probable inorganic carbon transporter subunit DabA from Idiomarina loihiensis (strain ATCC BAA-735 / DSM 15497 / L2-TR).